A 200-amino-acid chain; its full sequence is Probable GTP-binding protein EngB (200 aa).

The 175-residue stretch at Ser-26 to Lys-200 folds into the EngB-type G domain. GTP is bound by residues Gly-34–Ser-41, Gly-61–Gln-65, Asp-80–Gly-83, Thr-147–Asp-150, and Val-176–Ala-179. Ser-41 and Thr-63 together coordinate Mg(2+).

The protein belongs to the TRAFAC class TrmE-Era-EngA-EngB-Septin-like GTPase superfamily. EngB GTPase family. Mg(2+) serves as cofactor.

Its function is as follows. Necessary for normal cell division and for the maintenance of normal septation. This chain is Probable GTP-binding protein EngB, found in Ehrlichia canis (strain Jake).